Consider the following 603-residue polypeptide: MKLAHLSLFLLALHLSSSRSPSASDLPQEELVDQKCLLQKYTHRSCNKVFCQPWQRCIEGTCICKLPYQCPRAGTPVCAMNGRSYPTYCHQKSFECLHPEIKFSHNGTCAAEGKFNVSLIYGRTKTEGLVQVKLVDQDERMFICKNSWSMAEANVACVDLGFPLGVRDIQGSFNISGNLHINDTECLHVHCRGVETSLAECAFTKRRTELSNGLAGVVCYKQDADFPTSLSFQCVNGKHIPQEKACNGVNDCGDQSDELCCKGCRGNASLCKSGVCIPDQYKCNGEVDCITGEDESRCEEDRQQNIPKGLARSAQGEAEIETEETEMLTPGMDNERKRIKSLLPKLSCGVKRNTHTRRKRVIGGKPANVGDYPWQVAIKDGQRITCGGIYIGGCWILTAAHCVRPSRAHSYQVWTALLDWLKPNSQLGIQTVKRVIVHEKYNGATFQNDIALIEMKMHTGKKECELPNSVPACVPWSPYLFQPNDRCIISGWGRGKDNQKVYSLRWGEVDLIGNCSQFYPDRYYEKEMQCAGTRDGSIDACKGDSGGPLVCEDINNVTYVWGIVSWGENCGKPEFPGVYTRVANYFDWISYHVGRSLVSQHNV.

The signal sequence occupies residues 1 to 18 (MKLAHLSLFLLALHLSSS). Intrachain disulfides connect Cys36–Cys260, Cys46–Cys57, Cys51–Cys62, Cys64–Cys96, Cys70–Cys89, Cys78–Cys109, Cys144–Cys186, Cys157–Cys219, Cys191–Cys201, Cys234–Cys252, Cys246–Cys261, Cys264–Cys276, Cys271–Cys289, Cys283–Cys298, Cys348–Cys473, Cys386–Cys402, Cys394–Cys464, Cys487–Cys551, Cys515–Cys530, and Cys541–Cys570. A Kazal-like domain is found at 58–111 (IEGTCICKLPYQCPRAGTPVCAMNGRSYPTYCHQKSFECLHPEIKFSHNGTCAA). Asn106, Asn116, Asn174, and Asn182 each carry an N-linked (GlcNAc...) asparagine glycan. Residues 117–217 (VSLIYGRTKT…TELSNGLAGV (101 aa)) form the SRCR domain. LDL-receptor class A domains lie at 218-262 (VCYK…LCCK) and 263-299 (GCRG…SRCE). Ca(2+) is bound by residues Lys244, Asn247, Val249, Asp251, Asp257, and Glu258. A glycan (N-linked (GlcNAc...) asparagine) is linked at Asn267. Ca(2+) is bound by residues Tyr281, Asn284, Glu286, Asp288, Asp294, and Glu295. Residues 361 to 594 (VIGGKPANVG…YFDWISYHVG (234 aa)) enclose the Peptidase S1 domain. Residues His401 and Asp449 each act as charge relay system in the active site. Residue Asn514 is glycosylated (N-linked (GlcNAc...) asparagine). Ser545 serves as the catalytic Charge relay system. A glycan (N-linked (GlcNAc...) asparagine) is linked at Asn556.

Belongs to the peptidase S1 family. Heterodimer of a light and heavy chains; disulfide-linked. The fully processed and mature protein circulates as a zymogen, and is allosterically activated by substrate-induced remodeling of the active site. Interacts with C3b. Interacts with complement factor H. In terms of tissue distribution, expressed in the liver by hepatocytes. Also present in other cells such as monocytes, fibroblasts or keratinocytes.

It is found in the secreted. It localises to the extracellular space. It carries out the reaction Inactivates complement subcomponents C3b, iC3b and C4b by proteolytic cleavage.. Its function is as follows. Trypsin-like serine protease that plays an essential role in regulating the immune response by controlling all complement pathways. Inhibits these pathways by cleaving three peptide bonds in the alpha-chain of C3b and two bonds in the alpha-chain of C4b thereby inactivating these proteins. Essential cofactors for these reactions include factor H and C4BP in the fluid phase and membrane cofactor protein/CD46 and CR1 on cell surfaces. The presence of these cofactors on healthy cells allows degradation of deposited C3b by CFI in order to prevent undesired complement activation, while in apoptotic cells or microbes, the absence of such cofactors leads to C3b-mediated complement activation and subsequent opsonization. The protein is Complement factor I (Cfi) of Mus musculus (Mouse).